Consider the following 134-residue polypeptide: Late embryogenesis abundant protein 6 (134 aa).

A compositionally biased stretch (basic and acidic residues) spans 31–45 (ERAMARTKEEKEIAH). Disordered stretches follow at residues 31 to 53 (ERAMARTKEEKEIAHQRRKAKEA) and 80 to 134 (VTDH…HHHY). Residues 34-70 (MARTKEEKEIAHQRRKAKEAEANMDMHMAKAAHAEDK) adopt a coiled-coil conformation. Residues 115-127 (PPQTYHPTYPPTG) are compositionally biased toward low complexity.

Belongs to the LEA type 1 family.

Functionally, involved dehydration tolerance. Involved in the adaptive response of vascular plants to withstand water deficit. May possess chaperone-like activity under water deficit. The protein is Late embryogenesis abundant protein 6 of Arabidopsis thaliana (Mouse-ear cress).